The sequence spans 268 residues: Tropinone reductase homolog At2g29370 (268 aa).

22–46 (LVTGGSKGLGKAVVEELAMLGARVH) contributes to the NADP(+) binding site. Serine 155 lines the substrate pocket. The active-site Proton acceptor is tyrosine 168.

Belongs to the short-chain dehydrogenases/reductases (SDR) family. SDR65C subfamily.

In Arabidopsis thaliana (Mouse-ear cress), this protein is Tropinone reductase homolog At2g29370.